Here is a 138-residue protein sequence, read N- to C-terminus: ATP synthase epsilon chain (138 aa).

It belongs to the ATPase epsilon chain family. F-type ATPases have 2 components, CF(1) - the catalytic core - and CF(0) - the membrane proton channel. CF(1) has five subunits: alpha(3), beta(3), gamma(1), delta(1), epsilon(1). CF(0) has three main subunits: a, b and c.

It localises to the cellular thylakoid membrane. Its function is as follows. Produces ATP from ADP in the presence of a proton gradient across the membrane. In Synechococcus sp. (strain PCC 6716), this protein is ATP synthase epsilon chain (atpC).